The primary structure comprises 729 residues: Catalase-peroxidase (729 aa).

The interval 1-26 (MTMDQKTDNAGKCPVAHTAPRGRSNR) is disordered. The segment at residues 97-219 (WHSAGTYRIT…LAAVQMGLIY (123 aa)) is a cross-link (tryptophyl-tyrosyl-methioninium (Trp-Tyr) (with M-245)). H98 serves as the catalytic Proton acceptor. A cross-link (tryptophyl-tyrosyl-methioninium (Tyr-Met) (with W-97)) is located at residues 219–245 (YVNPEGPNGNPDPVAAAHDIRETFARM). H260 contacts heme b.

It belongs to the peroxidase family. Peroxidase/catalase subfamily. In terms of assembly, homodimer or homotetramer. It depends on heme b as a cofactor. Post-translationally, formation of the three residue Trp-Tyr-Met cross-link is important for the catalase, but not the peroxidase activity of the enzyme.

The catalysed reaction is H2O2 + AH2 = A + 2 H2O. It catalyses the reaction 2 H2O2 = O2 + 2 H2O. Functionally, bifunctional enzyme with both catalase and broad-spectrum peroxidase activity. This chain is Catalase-peroxidase, found in Sinorhizobium medicae (strain WSM419) (Ensifer medicae).